We begin with the raw amino-acid sequence, 123 residues long: Large ribosomal subunit protein bL12 (123 aa).

It belongs to the bacterial ribosomal protein bL12 family. Homodimer. Part of the ribosomal stalk of the 50S ribosomal subunit. Forms a multimeric L10(L12)X complex, where L10 forms an elongated spine to which 2 to 4 L12 dimers bind in a sequential fashion. Binds GTP-bound translation factors.

Functionally, forms part of the ribosomal stalk which helps the ribosome interact with GTP-bound translation factors. Is thus essential for accurate translation. This chain is Large ribosomal subunit protein bL12, found in Wigglesworthia glossinidia brevipalpis.